The sequence spans 821 residues: Maternal DNA replication licensing factor mcm6 (821 aa).

The C4-type zinc-finger motif lies at cysteine 159–cysteine 186. The MCM domain maps to leucine 347–valine 554. Residue glycine 397 to serine 404 participates in ATP binding. The Arginine finger motif lies at serine 529 to aspartate 532.

The protein belongs to the MCM family. As to quaternary structure, component of the mcm2-7 complex (RLF-M). The complex forms a toroidal hexameric ring with the proposed subunit order mcm2-mcm6-mcm4-mcm7-mcm3-mcm5. The heterodimer of mmcm3/mcm5 interacts with mcm4, mmcm6, mcm7 and weakly with mcm2. Component of the CMG helicase complex, composed of the mcm2-7 complex, the GINS complex and cdc45.

Its subcellular location is the nucleus. The protein localises to the chromosome. It carries out the reaction ATP + H2O = ADP + phosphate + H(+). Functionally, acts as a component of the mcm2-7 complex (mcm complex) which is the putative replicative helicase essential for 'once per cell cycle' DNA replication initiation and elongation in eukaryotic cells. The active ATPase sites in the mcm2-7 ring are formed through the interaction surfaces of two neighboring subunits such that a critical structure of a conserved arginine finger motif is provided in trans relative to the ATP-binding site of the Walker A box of the adjacent subunit. The six ATPase active sites, however, are likely to contribute differentially to the complex helicase activity. The existence of maternal and zygotic forms of mcm3 and mcm6 suggests that specific forms of mcm2-7 complexes may be used during different stages of development. The chain is Maternal DNA replication licensing factor mcm6 from Xenopus tropicalis (Western clawed frog).